The chain runs to 208 residues: Small ribosomal subunit protein uS3 (208 aa).

Residues 16 to 85 enclose the KH type-2 domain; sequence VDEYLKNKLP…KPQIEVKQIE (70 aa).

It belongs to the universal ribosomal protein uS3 family. Part of the 30S ribosomal subunit.

Functionally, binds the lower part of the 30S subunit head. The sequence is that of Small ribosomal subunit protein uS3 from Methanococcus aeolicus (strain ATCC BAA-1280 / DSM 17508 / OCM 812 / Nankai-3).